The chain runs to 464 residues: MSLHFLYYCSEPTLDVKIAFCQGFDKHVDVSSVVKHYNMSKSKVDNQFYSVEVGDSTFTVLKRYQNLKPIGSGAQGIVCAAYDAVLDRNVAIKKLSRPFQNQTHAKRAYRELVLMKCVNHKNIISLLNVFTPQKTLEEFQDVYLVMELMDANLCQVIQMELDHERMSYLLYQMLCGIKHLHSAGIIHRDLKPSNIVVKSDCTLKILDFGLARTAGTSFMMTPYVVTRYYRAPEVILGMGYKENVDIWSVGCIMGEMVRHKILFPGRDYIDQWNKVIEQLGTPCPEFMKKLQPTVRNYVENRPKYAGLTFPKLFPDSLFPADSEHNKLKASQARDLLSKMLVIDPAKRISVDDALQHPYINVWYDPAEVEAPPPQIYDKQLDEREHTIEEWKELIYKEVMNSEEKTKNGVVKGQPSPSGAAVNSSESLPPSSSVNDISSMSTDQTLASDTDSSLEASAGPLGCCR.

Residues 64-359 form the Protein kinase domain; it reads YQNLKPIGSG…VDDALQHPYI (296 aa). Residues 70 to 78 and Lys93 contribute to the ATP site; that span reads IGSGAQGIV. The active-site Proton acceptor is the Asp189. Thr221 is modified (phosphothreonine; by MAP2K7). Residues 221-223 carry the TXY motif; the sequence is TPY. Tyr223 is modified (phosphotyrosine; by MAP2K4). The disordered stretch occupies residues 405–464; sequence TKNGVVKGQPSPSGAAVNSSESLPPSSSVNDISSMSTDQTLASDTDSSLEASAGPLGCCR. Positions 423 to 432 are enriched in low complexity; sequence SSESLPPSSS. Over residues 433-454 the composition is skewed to polar residues; the sequence is VNDISSMSTDQTLASDTDSSLE. 2 S-palmitoyl cysteine lipidation sites follow: Cys462 and Cys463.

This sequence belongs to the protein kinase superfamily. CMGC Ser/Thr protein kinase family. MAP kinase subfamily. As to quaternary structure, interacts with MAPK8IP1/JIP-1 and MAPK8IP3/JIP-3/JSAP1. Interacts with SPAG9/MAPK8IP4/JIP4. Interacts with HDAC9 and MAPKBP1. Interacts with ARRB2; the interaction enhances MAPK10 activation by MAP3K5. Interacts with SARM1. Interacts with JUND; interaction is inhibited in the presence of MEN1. Requires Mg(2+) as cofactor. Post-translationally, dually phosphorylated on Thr-221 and Tyr-223 by MAP2K4 and MAP2K7, which activates the enzyme. MAP2K7 shows a strong preference for Thr-221 while MAP2K4 phosphorylates Tyr-223 preferentially. Weakly autophosphorylated on threonine and tyrosine residues in vitro. Palmitoylation regulates subcellular location and axonal development.

The protein resides in the cytoplasm. It is found in the membrane. Its subcellular location is the nucleus. It localises to the mitochondrion. It carries out the reaction L-seryl-[protein] + ATP = O-phospho-L-seryl-[protein] + ADP + H(+). It catalyses the reaction L-threonyl-[protein] + ATP = O-phospho-L-threonyl-[protein] + ADP + H(+). Its activity is regulated as follows. Activated by threonine and tyrosine phosphorylation by two dual specificity kinases, MAP2K4 and MAP2K7. MAP2K7 phosphorylates MAPK10 on Thr-221 causing a conformational change and a large increase in Vmax for the enzyme. MAP2K4 then phosphorylates Tyr-223 resulting in a further increase in Vmax. Inhibited by dual specificity phosphatases, such as DUSP1. Inhibited by HDAC9. Functionally, serine/threonine-protein kinase involved in various processes such as neuronal proliferation, differentiation, migration and programmed cell death. Extracellular stimuli such as pro-inflammatory cytokines or physical stress stimulate the stress-activated protein kinase/c-Jun N-terminal kinase (SAP/JNK) signaling pathway. In this cascade, two dual specificity kinases MAP2K4/MKK4 and MAP2K7/MKK7 phosphorylate and activate MAPK10/JNK3. In turn, MAPK10/JNK3 phosphorylates a number of transcription factors, primarily components of AP-1 such as JUN and ATF2 and thus regulates AP-1 transcriptional activity. Plays regulatory roles in the signaling pathways during neuronal apoptosis. Phosphorylates the neuronal microtubule regulator STMN2. Acts in the regulation of the amyloid-beta precursor protein/APP signaling during neuronal differentiation by phosphorylating APP. Also participates in neurite growth in spiral ganglion neurons. Phosphorylates the CLOCK-BMAL1 heterodimer and plays a role in the photic regulation of the circadian clock. Phosphorylates JUND and this phosphorylation is inhibited in the presence of MEN1. This is Mitogen-activated protein kinase 10 (Mapk10) from Rattus norvegicus (Rat).